The primary structure comprises 378 residues: MSHLDNGFRSLTLQRFPATDDVNPLQAWEAADEYLLQQLDDTEIRGPVLILNDAFGALSCALAEHKPYSIGDSYISELATRENLRLNGIDESSVKFLDSTADYPQQPGVVLIKVPKTLALLEQQLRALRKVVTSDTRIIAGAKARDIHTSTLELFEKVLGPTTTTLAWKKARLINCTFNEPPLADAPQTVSWKLEGTDWTIHNHANVFSRTGLDIGARFFMQHLPENLEGEIVDLGCGNGVIGLTLLDKNPQAKVVFVDESPMAVASSRLNVETNMPEALDRSEFMINNALSGVEPFRFNAVLCNPPFHQQHALTDNVAWEMFHHARRCLKINSELYIVANRHLDYFHKLKKIFGNCTTIATNNKFVVLKAVKLGRRR.

Belongs to the methyltransferase superfamily. RlmG family.

It is found in the cytoplasm. The catalysed reaction is guanosine(1835) in 23S rRNA + S-adenosyl-L-methionine = N(2)-methylguanosine(1835) in 23S rRNA + S-adenosyl-L-homocysteine + H(+). Its function is as follows. Specifically methylates the guanine in position 1835 (m2G1835) of 23S rRNA. The chain is Ribosomal RNA large subunit methyltransferase G from Shigella boydii serotype 18 (strain CDC 3083-94 / BS512).